Here is a 96-residue protein sequence, read N- to C-terminus: Aspartyl/glutamyl-tRNA(Asn/Gln) amidotransferase subunit C (96 aa).

This sequence belongs to the GatC family. As to quaternary structure, heterotrimer of A, B and C subunits.

It catalyses the reaction L-glutamyl-tRNA(Gln) + L-glutamine + ATP + H2O = L-glutaminyl-tRNA(Gln) + L-glutamate + ADP + phosphate + H(+). It carries out the reaction L-aspartyl-tRNA(Asn) + L-glutamine + ATP + H2O = L-asparaginyl-tRNA(Asn) + L-glutamate + ADP + phosphate + 2 H(+). In terms of biological role, allows the formation of correctly charged Asn-tRNA(Asn) or Gln-tRNA(Gln) through the transamidation of misacylated Asp-tRNA(Asn) or Glu-tRNA(Gln) in organisms which lack either or both of asparaginyl-tRNA or glutaminyl-tRNA synthetases. The reaction takes place in the presence of glutamine and ATP through an activated phospho-Asp-tRNA(Asn) or phospho-Glu-tRNA(Gln). This is Aspartyl/glutamyl-tRNA(Asn/Gln) amidotransferase subunit C from Bacillus anthracis (strain A0248).